A 326-amino-acid polypeptide reads, in one-letter code: Ribosomal large subunit pseudouridine synthase D (326 aa).

In terms of domain architecture, S4 RNA-binding spans 18 to 91 (QRLDQALAEM…IPLDIVYEDD (74 aa)). Residue D139 is part of the active site. The segment at 183–203 (GTVNEPISRHPTKRTHMSVHP) is disordered.

Belongs to the pseudouridine synthase RluA family.

It localises to the cytoplasm. The enzyme catalyses uridine(1911/1915/1917) in 23S rRNA = pseudouridine(1911/1915/1917) in 23S rRNA. Its function is as follows. Responsible for synthesis of pseudouridine from uracil at positions 1911, 1915 and 1917 in 23S ribosomal RNA. The polypeptide is Ribosomal large subunit pseudouridine synthase D (rluD) (Salmonella typhi).